Reading from the N-terminus, the 280-residue chain is CAG pathogenicity island protein 12 (280 aa).

Positions 1–20 are cleaved as a signal peptide; that stretch reads MKLRASVLIGATILCLILSA. Residue cysteine 21 is the site of N-palmitoyl cysteine attachment. Cysteine 21 is lipidated: S-diacylglycerol cysteine.

It localises to the cell membrane. The chain is CAG pathogenicity island protein 12 (cagT) from Helicobacter pylori (strain ATCC 700392 / 26695) (Campylobacter pylori).